Reading from the N-terminus, the 121-residue chain is MEAEVDKLELMFQKADSDLDYIQYRLEYEIKTNYPDSAGKKNPVTLLKELSAIKSRYQTLHVRFKPIAVEQKETKSRICATFNKTMTLIQELQKETDLELLPLTEEEKTAAEQLRAHMSDL.

Belongs to the SKA2 family. As to quaternary structure, component of the SKA complex, composed of SKA1, SKA2 and SKA3. The SKA complex is a homodimer organized around a central W-shaped coiled-coil structure, formed by the interacting domains of SKA1, SKA2, and SKA3, each end of the 'W' is extended further by the C-terminal microtubule-binding domains of SKA1 and SKA3; the complex forms extended structures on microtubules. May interact with NR3C1; the relevance of such interaction remains unclear in vivo. Interacts with the MIS12 complex subunit DSN1. Interacts with the NDC80 complex; the interaction is required to establish kinetochore-microtubule end-on attachments.

The protein resides in the cytoplasm. Its subcellular location is the cytoskeleton. It localises to the spindle. It is found in the chromosome. The protein localises to the centromere. The protein resides in the kinetochore. Its subcellular location is the microtubule organizing center. It localises to the centrosome. Component of the SKA complex, a microtubule plus end-binding complex of the outer kinetochore that stabilizes spindle microtubule-kinetochore attachments, promotes alignment of chromosomes at the mitotic spindle equator (chromosome congression) and assists suppression of the spindle assembly checkpoint. Kinetochores, consisting of a centromere-associated inner segment and a microtubule-contacting outer segment, play a crucial role in chromosome segregation by mediating the physical connection between centromeric DNA and spindle microtubules. The outer kinetochore is made up of the ten-subunit KMN network complex, comprising the MIS12, NDC80 and KNL1 complexes, and auxiliary microtubule-associated components such as the SKA complex; together they connect the outer kinetochore with the inner kinetochore, bind microtubules, and mediate interactions with mitotic checkpoint proteins that delay anaphase until chromosomes are bioriented on the spindle. The SKA complex is loaded onto bioriented kinetochores and it facilitates chromosome congression by stabilizing microtubules together with MAPRE1, and end-on attachment of the NDC80 complex to depolymerizing spindle microtubules, thereby assisting the poleward-moving kinetochore in withstanding microtubule pulling forces. The complex associates with dynamic microtubule plus-ends and can track both depolymerizing and elongating microtubules. The complex recruits protein phosphatase 1 (PP1) to the kinetochore in prometaphase and metaphase, to oppose spindle assembly checkpoint signaling and promote the onset of anaphase. Binds directly to microtubules; but with a much lower affinity than SKA1. During meiosis the SKA complex stabilizes the meiotic spindle and is required for its migration to the cortex. The polypeptide is SKA complex subunit 2 (SKA2) (Bos taurus (Bovine)).